Reading from the N-terminus, the 75-residue chain is UPF0270 protein PP_1747 (75 aa).

The protein belongs to the UPF0270 family.

This Pseudomonas putida (strain ATCC 47054 / DSM 6125 / CFBP 8728 / NCIMB 11950 / KT2440) protein is UPF0270 protein PP_1747.